Reading from the N-terminus, the 200-residue chain is Large ribosomal subunit protein uL4 (200 aa).

Residues 43 to 72 (RAQKTRAEVSGSGKKPWRQKGTGRARSGDI) form a disordered region.

This sequence belongs to the universal ribosomal protein uL4 family. In terms of assembly, part of the 50S ribosomal subunit.

In terms of biological role, one of the primary rRNA binding proteins, this protein initially binds near the 5'-end of the 23S rRNA. It is important during the early stages of 50S assembly. It makes multiple contacts with different domains of the 23S rRNA in the assembled 50S subunit and ribosome. Forms part of the polypeptide exit tunnel. This is Large ribosomal subunit protein uL4 from Haemophilus ducreyi (strain 35000HP / ATCC 700724).